We begin with the raw amino-acid sequence, 325 residues long: Tetraacyldisaccharide 4'-kinase (325 aa).

Residue 55–62 (TAGGNGKT) coordinates ATP.

Belongs to the LpxK family.

The catalysed reaction is a lipid A disaccharide + ATP = a lipid IVA + ADP + H(+). It functions in the pathway glycolipid biosynthesis; lipid IV(A) biosynthesis; lipid IV(A) from (3R)-3-hydroxytetradecanoyl-[acyl-carrier-protein] and UDP-N-acetyl-alpha-D-glucosamine: step 6/6. Its function is as follows. Transfers the gamma-phosphate of ATP to the 4'-position of a tetraacyldisaccharide 1-phosphate intermediate (termed DS-1-P) to form tetraacyldisaccharide 1,4'-bis-phosphate (lipid IVA). This is Tetraacyldisaccharide 4'-kinase from Citrobacter koseri (strain ATCC BAA-895 / CDC 4225-83 / SGSC4696).